Reading from the N-terminus, the 630-residue chain is 1-deoxy-D-xylulose-5-phosphate synthase (630 aa).

Residues His-72 and 113-115 (GHS) each bind thiamine diphosphate. Asp-144 is a Mg(2+) binding site. Thiamine diphosphate contacts are provided by residues 145-146 (GA), Asn-173, Tyr-284, and Glu-367. Asn-173 contributes to the Mg(2+) binding site.

The protein belongs to the transketolase family. DXPS subfamily. In terms of assembly, homodimer. Mg(2+) is required as a cofactor. Requires thiamine diphosphate as cofactor.

The enzyme catalyses D-glyceraldehyde 3-phosphate + pyruvate + H(+) = 1-deoxy-D-xylulose 5-phosphate + CO2. It participates in metabolic intermediate biosynthesis; 1-deoxy-D-xylulose 5-phosphate biosynthesis; 1-deoxy-D-xylulose 5-phosphate from D-glyceraldehyde 3-phosphate and pyruvate: step 1/1. Functionally, catalyzes the acyloin condensation reaction between C atoms 2 and 3 of pyruvate and glyceraldehyde 3-phosphate to yield 1-deoxy-D-xylulose-5-phosphate (DXP). This Bacillus mycoides (strain KBAB4) (Bacillus weihenstephanensis) protein is 1-deoxy-D-xylulose-5-phosphate synthase.